The sequence spans 257 residues: MVGEEETKKRVVTESLGWLTESSIMPKKHRAIEGVGPSSIMELKAQLYKSQEEAKQTKDFTGSDAQYHRAKERIAAKDSFAAKNSGVESRNLKDKLEHKAVKDGAVSYAALEKKAQLYDKLARGELSDEEGEEKYCVDFFRKGIQHEDPKPSSTYNSSISAPPEDFKQDGEDDGSLFSTKFAGLGHAIGTADVGQHVRMVREVHEEVNQAREKATELKQRRQEQATNRREKLKQAYLRKQLEKLKAQQQQQEDEQKT.

At Ser-127 the chain carries Phosphoserine. Disordered regions lie at residues 146 to 174 (HEDP…EDDG) and 210 to 231 (AREK…RREK). Polar residues predominate over residues 151–160 (PSSTYNSSIS). Residues 196–257 (HVRMVREVHE…QQQQEDEQKT (62 aa)) adopt a coiled-coil conformation.

This is an uncharacterized protein from Arabidopsis thaliana (Mouse-ear cress).